The primary structure comprises 119 residues: Hydrogenase maturation factor HypA (119 aa).

Position 2 (H2) interacts with Ni(2+). 4 residues coordinate Zn(2+): C73, C76, C90, and C93.

The protein belongs to the HypA/HybF family.

In terms of biological role, involved in the maturation of [NiFe] hydrogenases. Required for nickel insertion into the metal center of the hydrogenase. In Wolinella succinogenes (strain ATCC 29543 / DSM 1740 / CCUG 13145 / JCM 31913 / LMG 7466 / NCTC 11488 / FDC 602W) (Vibrio succinogenes), this protein is Hydrogenase maturation factor HypA.